A 614-amino-acid chain; its full sequence is Interleukin-18 receptor accessory protein (614 aa).

The first 19 residues, 1 to 19 (MLCLGWVFLWFVAGEKTTG), serve as a signal peptide directing secretion. The Extracellular portion of the chain corresponds to 20-356 (FNHSACATKK…RTIRLRKKEE (337 aa)). Asparagine 21 is a glycosylation site (N-linked (GlcNAc...) asparagine). A disulfide bond links cysteine 46 and cysteine 126. Positions 59 to 78 (ASQLSPTQSPAHKPCSGSQK) are disordered. Ig-like C2-type domains lie at 148 to 234 (PQRN…WTVR) and 250 to 352 (PEIL…IRLR). The N-linked (GlcNAc...) asparagine glycan is linked to asparagine 151. Disulfide bonds link cysteine 154–cysteine 179, cysteine 174–cysteine 220, and cysteine 179–cysteine 220. An N-linked (GlcNAc...) asparagine glycan is attached at asparagine 227. An intrachain disulfide couples cysteine 272 to cysteine 336. A glycan (N-linked (GlcNAc...) asparagine) is linked at asparagine 344. The helical transmembrane segment at 357-377 (VVFVYILLGTALMLVGVLVAA) threads the bilayer. The Cytoplasmic segment spans residues 378–614 (AFLYWYWIEV…LLLYSDQKRC (237 aa)). The region spanning 405-558 (KEFDAFVSYS…RFWTQIRYHM (154 aa)) is the TIR domain. Glutamate 492 is an active-site residue.

This sequence belongs to the interleukin-1 receptor family. In terms of assembly, forms a ternary complex with IL18 and IL18R1. Within this complex, IL18R1 is involved in ligand-binding and IL18RAP in signaling leading to NF-kappa-B and JNK activation.

The protein resides in the cell membrane. It carries out the reaction NAD(+) + H2O = ADP-D-ribose + nicotinamide + H(+). In terms of biological role, within the IL18 receptor complex, does not mediate IL18-binding, but involved in IL18-dependent signal transduction, leading to NF-kappa-B and JNK activation. May play a role in IL18-mediated IFNG synthesis from T-helper 1 (Th1) cells. The sequence is that of Interleukin-18 receptor accessory protein from Mus musculus (Mouse).